Reading from the N-terminus, the 375-residue chain is Alanine racemase (375 aa).

The active-site Proton acceptor; specific for D-alanine is Lys-40. N6-(pyridoxal phosphate)lysine is present on Lys-40. Position 140 (Arg-140) interacts with substrate. Tyr-268 functions as the Proton acceptor; specific for L-alanine in the catalytic mechanism. Residue Met-315 participates in substrate binding.

Belongs to the alanine racemase family. Pyridoxal 5'-phosphate serves as cofactor.

It carries out the reaction L-alanine = D-alanine. The protein operates within amino-acid biosynthesis; D-alanine biosynthesis; D-alanine from L-alanine: step 1/1. Catalyzes the interconversion of L-alanine and D-alanine. May also act on other amino acids. This Limosilactobacillus reuteri (strain DSM 20016) (Lactobacillus reuteri) protein is Alanine racemase (alr).